We begin with the raw amino-acid sequence, 517 residues long: Ribonuclease Y (517 aa).

A helical membrane pass occupies residues 1-21; it reads MIEFLIGLIAAVVGILVGYLI. Residues 207-271 form the KH domain; that stretch reads LINVVNIKND…IAVRTVELLV (65 aa). The region spanning 333 to 426 is the HD domain; sequence ALIHSLEVAH…VCTADVLSAA (94 aa).

The protein belongs to the RNase Y family.

The protein resides in the cell membrane. In terms of biological role, endoribonuclease that initiates mRNA decay. This is Ribonuclease Y from Campylobacter hominis (strain ATCC BAA-381 / DSM 21671 / CCUG 45161 / LMG 19568 / NCTC 13146 / CH001A).